The chain runs to 747 residues: Phosphoribosylformylglycinamidine synthase subunit PurL (747 aa).

Residue histidine 46 is part of the active site. Positions 49 and 88 each coordinate ATP. Position 90 (glutamate 90) interacts with Mg(2+). Residues 91-94 and arginine 113 contribute to the substrate site; that span reads SHNH. Histidine 92 serves as the catalytic Proton acceptor. Aspartate 114 is a binding site for Mg(2+). Glutamine 237 serves as a coordination point for substrate. Mg(2+) is bound at residue aspartate 265. A substrate-binding site is contributed by 309–311; that stretch reads ESQ. Positions 493 and 530 each coordinate ATP. A Mg(2+)-binding site is contributed by asparagine 531. A substrate-binding site is contributed by serine 533.

The protein belongs to the FGAMS family. As to quaternary structure, monomer. Part of the FGAM synthase complex composed of 1 PurL, 1 PurQ and 2 PurS subunits.

It is found in the cytoplasm. The enzyme catalyses N(2)-formyl-N(1)-(5-phospho-beta-D-ribosyl)glycinamide + L-glutamine + ATP + H2O = 2-formamido-N(1)-(5-O-phospho-beta-D-ribosyl)acetamidine + L-glutamate + ADP + phosphate + H(+). It functions in the pathway purine metabolism; IMP biosynthesis via de novo pathway; 5-amino-1-(5-phospho-D-ribosyl)imidazole from N(2)-formyl-N(1)-(5-phospho-D-ribosyl)glycinamide: step 1/2. Its function is as follows. Part of the phosphoribosylformylglycinamidine synthase complex involved in the purines biosynthetic pathway. Catalyzes the ATP-dependent conversion of formylglycinamide ribonucleotide (FGAR) and glutamine to yield formylglycinamidine ribonucleotide (FGAM) and glutamate. The FGAM synthase complex is composed of three subunits. PurQ produces an ammonia molecule by converting glutamine to glutamate. PurL transfers the ammonia molecule to FGAR to form FGAM in an ATP-dependent manner. PurS interacts with PurQ and PurL and is thought to assist in the transfer of the ammonia molecule from PurQ to PurL. This Deinococcus radiodurans (strain ATCC 13939 / DSM 20539 / JCM 16871 / CCUG 27074 / LMG 4051 / NBRC 15346 / NCIMB 9279 / VKM B-1422 / R1) protein is Phosphoribosylformylglycinamidine synthase subunit PurL.